A 359-amino-acid chain; its full sequence is MIALPQDRMDQLLKRFSMIESQMANNPDSDTYVKLASEYSELQDVVGKIRELSDARMEASDLAAMRDDASTDAEMRALAVEELPEVEKRIAVLEQDVQILLLPKDAADDKNAILEIRAGTGGLEAALFAGDLFRMYERYAAEKGWRVELVSASEGDAGGYKEIITTVSGKGVFSKLKFESGVHRVQRVPETEAGGRIHTSAATVAVLPEAEDIDIEIRNEDIRIDTMRASGAGGQHVNTTDSAVRITHIPTGIMVVQAEKSQHQNRARAMQILRARLYDMERQKAESERSQARRSQVGSGDRSERIRTYNFPQGRVTDHRINLTLYKLDRVMEGDLDELVDALISDHQTALLAELGEQP.

An N5-methylglutamine modification is found at Gln235. The interval 283 to 309 (QKAESERSQARRSQVGSGDRSERIRTY) is disordered.

This sequence belongs to the prokaryotic/mitochondrial release factor family. In terms of processing, methylated by PrmC. Methylation increases the termination efficiency of RF1.

The protein localises to the cytoplasm. In terms of biological role, peptide chain release factor 1 directs the termination of translation in response to the peptide chain termination codons UAG and UAA. The polypeptide is Peptide chain release factor 1 (Brucella suis (strain ATCC 23445 / NCTC 10510)).